Consider the following 470-residue polypeptide: Uronate isomerase (470 aa).

It belongs to the metallo-dependent hydrolases superfamily. Uronate isomerase family.

The enzyme catalyses D-glucuronate = D-fructuronate. It catalyses the reaction aldehydo-D-galacturonate = keto-D-tagaturonate. It participates in carbohydrate metabolism; pentose and glucuronate interconversion. The polypeptide is Uronate isomerase (Cronobacter sakazakii (strain ATCC BAA-894) (Enterobacter sakazakii)).